A 345-amino-acid polypeptide reads, in one-letter code: GTP 3',8-cyclase (345 aa).

A Radical SAM core domain is found at 10–236 (SHGRPLGVLR…QCVSSHWPLD (227 aa)). A GTP-binding site is contributed by arginine 19. Positions 26 and 30 each coordinate [4Fe-4S] cluster. S-adenosyl-L-methionine is bound at residue tyrosine 32. A [4Fe-4S] cluster-binding site is contributed by cysteine 33. A GTP-binding site is contributed by arginine 65. Glycine 69 is a binding site for S-adenosyl-L-methionine. Threonine 98 contacts GTP. Serine 123 is a binding site for S-adenosyl-L-methionine. Lysine 172 is a GTP binding site. Methionine 206 is a binding site for S-adenosyl-L-methionine. The [4Fe-4S] cluster site is built by cysteine 269 and cysteine 272. GTP is bound at residue 274–276 (RIR). Position 286 (cysteine 286) interacts with [4Fe-4S] cluster.

Belongs to the radical SAM superfamily. MoaA family. In terms of assembly, monomer and homodimer. It depends on [4Fe-4S] cluster as a cofactor.

It carries out the reaction GTP + AH2 + S-adenosyl-L-methionine = (8S)-3',8-cyclo-7,8-dihydroguanosine 5'-triphosphate + 5'-deoxyadenosine + L-methionine + A + H(+). It participates in cofactor biosynthesis; molybdopterin biosynthesis. Catalyzes the cyclization of GTP to (8S)-3',8-cyclo-7,8-dihydroguanosine 5'-triphosphate. The sequence is that of GTP 3',8-cyclase from Synechococcus sp. (strain CC9902).